We begin with the raw amino-acid sequence, 187 residues long: Calcium and integrin-binding family member 3 (187 aa).

EF-hand domains are found at residues 66–101 (KDNP…MSEM), 103–138 (PRDL…LTRG), and 144–179 (EVSL…APDF). Ca(2+)-binding residues include Asp-116, Asn-118, Asp-120, Tyr-122, Asp-127, Asp-157, Asp-159, Asp-161, Arg-163, and Asp-168.

As to quaternary structure, monomer and homodimer. Interacts with ITGA2B (via C-terminus cytoplasmic tail region); the interaction is stabilized/increased in a calcium and magnesium-dependent manner. Interacts with TMC1.

Its function is as follows. Acts a an auxiliary subunit of the sensory mechanoelectrical transduction (MET) channel in hair cells. Plays a role in regulating hair cell MET channel localization and function. In Homo sapiens (Human), this protein is Calcium and integrin-binding family member 3 (CIB3).